The primary structure comprises 222 residues: UPF0488 protein C8orf33 homolog (222 aa).

Over residues methionine 1–serine 16 the composition is skewed to low complexity. 3 disordered regions span residues methionine 1–leucine 103, lysine 119–proline 146, and valine 186–proline 210. Alanine 2 carries the post-translational modification N-acetylalanine. Over residues arginine 17–proline 28 the composition is skewed to basic residues. Residue arginine 27 is modified to Omega-N-methylarginine. Residues serine 29–proline 39 show a composition bias toward low complexity. Serine 75 is subject to Phosphoserine. Low complexity predominate over residues proline 93 to leucine 103.

It belongs to the UPF0488 family.

This Mus musculus (Mouse) protein is UPF0488 protein C8orf33 homolog.